Consider the following 223-residue polypeptide: Large ribosomal subunit protein uL4c (223 aa).

Positions Thr-61–Gly-96 are disordered.

It belongs to the universal ribosomal protein uL4 family. As to quaternary structure, part of the 50S ribosomal subunit.

The protein resides in the plastid. Its subcellular location is the chloroplast. In terms of biological role, probably binds the 23S rRNA. This Guillardia theta (Cryptophyte) protein is Large ribosomal subunit protein uL4c (rpl4).